The primary structure comprises 515 residues: Alpha-1B adrenergic receptor (515 aa).

Residues 1–45 (MNPDLDTGHNTSAPAQWGELKDANFTGPNQTSSNSTLPQLDVTRA) lie on the Extracellular side of the membrane. N-linked (GlcNAc...) asparagine glycosylation is found at Asn10, Asn24, and Asn34. The helical transmembrane segment at 46–70 (ISVGLVLGAFILFAIVGNILVILSV) threads the bilayer. Over 71–83 (ACNRHLRTPTNYF) the chain is Cytoplasmic. The chain crosses the membrane as a helical span at residues 84–105 (IVNLAIADLLLSFTVLPFSATL). The Extracellular segment spans residues 106–115 (EVLGYWVLGR). A helical transmembrane segment spans residues 116-141 (IFCDIWAAVDVLCCTASILSLCAISI). A disulfide bridge links Cys118 with Cys195. Over 142 to 161 (DRYIGVRYSLQYPTLVTRRK) the chain is Cytoplasmic. The chain crosses the membrane as a helical span at residues 162–184 (AILALLSVWVLSTVISIGPLLGW). Topologically, residues 185-201 (KEPAPNDDKECGVTEEP) are extracellular. A helical membrane pass occupies residues 202-224 (FYALFSSLGSFYIPLAVILVMYC). The Cytoplasmic portion of the chain corresponds to 225 to 295 (RVYIVAKRTT…FSREKKAAKT (71 aa)). A Phosphothreonine modification is found at Thr264. A helical membrane pass occupies residues 296-319 (LGIVVGMFILCWLPFFIALPLGSL). The Extracellular portion of the chain corresponds to 320 to 326 (FSTLKPP). Residues 327–351 (DAVFKVVFWLGYFNSCLNPIIYPCS) traverse the membrane as a helical segment. Residues 352-515 (SKEFKRAFMR…SNMPLAPGHF (164 aa)) are Cytoplasmic-facing. Cys365 carries the S-palmitoyl cysteine lipid modification. The Nuclear localization signal motif lies at 368 to 378 (RSGRRRRRRRR). Disordered regions lie at residues 392–428 (GGSL…SPGY) and 473–515 (LLGE…PGHF). Over residues 410-424 (SCMSGSQRTLPSASP) the composition is skewed to polar residues.

This sequence belongs to the G-protein coupled receptor 1 family. Adrenergic receptor subfamily. ADRA1B sub-subfamily. As to quaternary structure, homo- and heterooligomer. Heterooligomerizes with ADRA1B homooligomers in cardiac myocytes. Interacts with CAVIN4.

It localises to the nucleus membrane. It is found in the cell membrane. The protein localises to the cytoplasm. The protein resides in the membrane. Its subcellular location is the caveola. Functionally, this alpha-adrenergic receptor mediates its action by association with G proteins that activate a phosphatidylinositol-calcium second messenger system. Its effect is mediated by G(q) and G(11) proteins. Nuclear ADRA1A-ADRA1B heterooligomers regulate phenylephrine (PE)-stimulated ERK signaling in cardiac myocytes. The polypeptide is Alpha-1B adrenergic receptor (ADRA1B) (Mesocricetus auratus (Golden hamster)).